The chain runs to 407 residues: O-methyltransferase verK (407 aa).

Residues Glu263 and 295 to 297 (GDF) each bind S-adenosyl-L-methionine. His314 functions as the Proton acceptor in the catalytic mechanism.

Belongs to the class I-like SAM-binding methyltransferase superfamily. Cation-independent O-methyltransferase family.

Its pathway is mycotoxin biosynthesis. Its function is as follows. O-methyltransferase; part of the gene cluster that mediates the biosynthesis of 11'-deoxyverticillin A, one of the dimeric epipolythiodioxopiperazines (ETPs) from the verticillin family that act as mycotoxins. 11'-deoxyverticillin A is required for normal conidiation. The nonribosomal peptide synthetase verP is speculated to be responsible for condensation of amino acids to form the carbon skeleton of verticillin, whereas the cluster-specific tailoring enzymes are involved in further modifications leading to the production of 11'-deoxyverticillin A. This chain is O-methyltransferase verK, found in Clonostachys rogersoniana.